A 615-amino-acid chain; its full sequence is MTGSIGQAPAIDKRDFDINRRSSTPHETAAQEDEALLHSRPRSRLSVGNRFSDNDDGLLSDVVEEIVERDRQRMRREVVRVGSFVWGVITCLGAGSITAFSLYGPLLLTRLNYTQLRVNEVSIAAGISMYLPVSLAGYLCDRYSPSPLTLFAGIAFGLGYSLAAFVYKSGPPPDAGGNGWPFWVMVVAFIAIGVATCSMYLAAVTTCAKNFGRGKHKGIILAVPIAAFGLSGMWQSQVGTYFLCERLKDSNCGDVDVYKYFLFLAILLLTIGVIGTFALRIVDDEEEKYIDEAVEELERSGLLAESEFFRPRSEVQAAYGTFSDDHEDNGSVDDQSVTISEELREAARREKEREEEERRKKNWLLNYETRIFLADHTMWWLALGFFLVTGPGEAYLNNLGTIVQTLNLDTTAIVDSHPAGLPSTHVTIIALTSTIARLLTGSLSDLFAPTARRHFTVDQETAGPDPFTKQRPALSRLAFLIPSALLLSLGFLLLASPLPTHHPELSHLTTALVGLGYGSIFSLVPIIISVVWGVENFGTNWGIVAMFPAAGAAMWGVIYSRAYQSAADGSPTDDGQCHGWKCFGFWSIGCTFSVWVAIVAWLVAWTSWRRRGVVV.

The segment at 1–35 is disordered; the sequence is MTGSIGQAPAIDKRDFDINRRSSTPHETAAQEDEA. Positions 11 to 20 are enriched in basic and acidic residues; it reads IDKRDFDINR. Residues 84-104 form a helical membrane-spanning segment; it reads FVWGVITCLGAGSITAFSLYG. N-linked (GlcNAc...) asparagine glycosylation occurs at asparagine 112. The next 5 helical transmembrane spans lie at 120 to 140, 147 to 167, 182 to 202, 218 to 238, and 261 to 281; these read EVSIAAGISMYLPVSLAGYLC, PLTLFAGIAFGLGYSLAAFVY, FWVMVVAFIAIGVATCSMYLA, GIILAVPIAAFGLSGMWQSQV, and FLFLAILLLTIGVIGTFALRI. Residue asparagine 329 is glycosylated (N-linked (GlcNAc...) asparagine). 6 helical membrane passes run 371–391, 428–448, 477–497, 512–532, 538–558, and 583–603; these read IFLADHTMWWLALGFFLVTGP, IIALTSTIARLLTGSLSDLFA, LAFLIPSALLLSLGFLLLASP, LVGLGYGSIFSLVPIIISVVW, GTNWGIVAMFPAAGAAMWGVI, and FGFWSIGCTFSVWVAIVAWLV.

This sequence belongs to the major facilitator superfamily.

It is found in the vacuole membrane. Functionally, probable transporter. This chain is Probable transporter mch1 (mch1), found in Emericella nidulans (strain FGSC A4 / ATCC 38163 / CBS 112.46 / NRRL 194 / M139) (Aspergillus nidulans).